The following is a 464-amino-acid chain: MTGRVTSVRGPVLDIRVEGPLPAIGDVVEVGSLPVVAEIQAHLGAADVRAIALHSTQGIARGETVRTTGGPLRVPTGPAVLGRLLDVAGRPADLGPPIPAGAPRAPILHPAPPLAAQDARFQVFSTGIKVLDLLAPLAQGGKTAMFGGAGVGKTVLVMELIRAMVSGYDGISVFAGVGERSREGHEMLGEMKASGVLDRTVLVYGQMNEPPGARWRVPLTALTIAEGFRDGEGRNVLLLIDNVFRFVQAGAEVSGLLGRMPSRVGYQPTLETEVAALQERIASVGRASVTAIEAVYVPADDFTDPAVTAISAHVDSTVVLSRQLAAEGIYPAIDPLATTSVLLDPAVVGEEHARVAGRLKEAIEHYHELRDVIALLGIEELGREEQLMVGRARKLQRFLTQPFFVAAAYTGMEGRSVPVAETVQGCAAILGGECDDWDEGSLYMIGTLAEARAREEARRRKGAA.

147–154 (GGAGVGKT) is an ATP binding site.

Belongs to the ATPase alpha/beta chains family. F-type ATPases have 2 components, CF(1) - the catalytic core - and CF(0) - the membrane proton channel. CF(1) has five subunits: alpha(3), beta(3), gamma(1), delta(1), epsilon(1). CF(0) has four main subunits: a(1), b(1), b'(1) and c(9-12).

The protein localises to the cell inner membrane. The catalysed reaction is ATP + H2O + 4 H(+)(in) = ADP + phosphate + 5 H(+)(out). Produces ATP from ADP in the presence of a proton gradient across the membrane. The catalytic sites are hosted primarily by the beta subunits. This Cereibacter sphaeroides (strain ATCC 17023 / DSM 158 / JCM 6121 / CCUG 31486 / LMG 2827 / NBRC 12203 / NCIMB 8253 / ATH 2.4.1.) (Rhodobacter sphaeroides) protein is ATP synthase subunit beta 2.